Here is a 150-residue protein sequence, read N- to C-terminus: C-type lectin mosGCTL-7 (150 aa).

An N-terminal signal peptide occupies residues 1-17 (MQLVHVLVVLLSVVAHA). The C-type lectin domain occupies 18–140 (KKFFIPNLKA…CRGFKAYIVC (123 aa)). N67 carries N-linked (GlcNAc...) asparagine glycosylation. A disulfide bridge links C111 with C131.

Interacts with putative receptor-type tyrosine-protein phosphatase mosPTP-1; the interaction probably mediates the recruitment of Japanese encephalitis virus particles in complex with C-type lectin mosGCTL-7 to the cell surface. In terms of assembly, (Microbial infection) Interacts with envelope protein E (glycosylated) of Japanese encephalitis virus in a calcium-dependent manner.

Its subcellular location is the secreted. Carbohydrate-binding protein. Functionally, (Microbial infection) Facilitates Japanese encephalitis virus infection in mosquitoes probably via capturing viral particles and presenting them to a ligand on the cell surface, thereby facilitating viral entry. The sequence is that of C-type lectin mosGCTL-7 from Aedes aegypti (Yellowfever mosquito).